The primary structure comprises 492 residues: N-succinylglutamate 5-semialdehyde dehydrogenase (492 aa).

220–225 is an NAD(+) binding site; it reads GRANTG. Residues Glu243 and Cys277 contribute to the active site.

It belongs to the aldehyde dehydrogenase family. AstD subfamily.

It catalyses the reaction N-succinyl-L-glutamate 5-semialdehyde + NAD(+) + H2O = N-succinyl-L-glutamate + NADH + 2 H(+). Its pathway is amino-acid degradation; L-arginine degradation via AST pathway; L-glutamate and succinate from L-arginine: step 4/5. In terms of biological role, catalyzes the NAD-dependent reduction of succinylglutamate semialdehyde into succinylglutamate. The polypeptide is N-succinylglutamate 5-semialdehyde dehydrogenase (Shigella boydii serotype 4 (strain Sb227)).